The chain runs to 309 residues: Carbamate kinase 3 (309 aa).

This sequence belongs to the carbamate kinase family.

It is found in the cytoplasm. It catalyses the reaction hydrogencarbonate + NH4(+) + ATP = carbamoyl phosphate + ADP + H2O + H(+). The protein operates within metabolic intermediate metabolism; carbamoyl phosphate degradation; CO(2) and NH(3) from carbamoyl phosphate: step 1/1. The chain is Carbamate kinase 3 (arcC3) from Staphylococcus aureus (strain USA300).